The primary structure comprises 511 residues: Frizzled/smoothened-like sans CRD protein C (511 aa).

An N-terminal signal peptide occupies residues 1–25; sequence MNQINKFIKNLYLIIITIILIIVIS. The Extracellular segment spans residues 26–93; it reads NDNNGLFING…QWESYFEMSL (68 aa). N-linked (GlcNAc...) asparagine glycosylation is present at asparagine 51. Residues 94–114 form a helical membrane-spanning segment; the sequence is IMGSISMFASLFLIITYSPLI. Over 115–122 the chain is Cytoplasmic; the sequence is NKKHTRHT. A helical membrane pass occupies residues 123 to 143; that stretch reads VGILCMSIGIFFVMVSDGRQL. At 144–172 the chain is on the extracellular side; that stretch reads WDIESPGEYKKYCPDTGRYARQSDTKCLT. The helical transmembrane segment at 173–193 threads the bilayer; the sequence is TGLFFQFGCVTAIGWWSILAV. Residues 194 to 209 are Cytoplasmic-facing; that stretch reads DLWMTIAKKVQTTKKQ. Residues 210–230 traverse the membrane as a helical segment; the sequence is LLYYLIGINTVSLILTFGPVV. Residues 231–253 are Extracellular-facing; that stretch reads KNQYGFGNAAIGCWMLDLKYQYG. Residues 254–274 traverse the membrane as a helical segment; it reads FFWIPVGICLSVGSVFIGLIF. Topologically, residues 275-295 are cytoplasmic; it reads WEIYKISDAVKKRYLKKHIKP. A helical transmembrane segment spans residues 296–316; sequence LCLIVLMCLEFLYMFIYYSYI. At 317-357 the chain is on the extracellular side; sequence TANQPTYNKHVAEYIMCLIINAANVPGSYTCQLKTVSPTAQ. A helical transmembrane segment spans residues 358 to 378; it reads FLFLIAIRLMGLQGLIFYGLT. Topologically, residues 379 to 511 are cytoplasmic; sequence AATKKVWANS…RVNSPDNLQP (133 aa). The tract at residues 430–511 is disordered; sequence NGYTTGGSDN…RVNSPDNLQP (82 aa). The segment covering 433–443 has biased composition (gly residues); it reads TTGGSDNGVGS. Positions 451–460 are enriched in polar residues; it reads KSSSNGGAQD. Residues 461-485 show a composition bias toward low complexity; the sequence is NNNNNNNNNNNNNNNNNNNNNNNNN. Over residues 486–511 the composition is skewed to polar residues; the sequence is SSSLEISGVESNNSTPRVNSPDNLQP.

The protein belongs to the G-protein coupled receptor Fz/Smo family.

Its subcellular location is the membrane. This chain is Frizzled/smoothened-like sans CRD protein C (fscC), found in Dictyostelium discoideum (Social amoeba).